We begin with the raw amino-acid sequence, 41 residues long: Large ribosomal subunit protein bL36 (41 aa).

It belongs to the bacterial ribosomal protein bL36 family.

The protein is Large ribosomal subunit protein bL36 of Rhodopseudomonas palustris (strain TIE-1).